The following is a 316-amino-acid chain: Pantothenate kinase (316 aa).

Position 99-106 (99-106 (GSVAVGKS)) interacts with ATP.

This sequence belongs to the prokaryotic pantothenate kinase family.

It localises to the cytoplasm. The enzyme catalyses (R)-pantothenate + ATP = (R)-4'-phosphopantothenate + ADP + H(+). It functions in the pathway cofactor biosynthesis; coenzyme A biosynthesis; CoA from (R)-pantothenate: step 1/5. This is Pantothenate kinase (coaA) from Pasteurella multocida (strain Pm70).